The sequence spans 263 residues: Tryptophan synthase alpha chain (263 aa).

Residues glutamate 50 and aspartate 61 each act as proton acceptor in the active site.

Belongs to the TrpA family. In terms of assembly, tetramer of two alpha and two beta chains.

It carries out the reaction (1S,2R)-1-C-(indol-3-yl)glycerol 3-phosphate + L-serine = D-glyceraldehyde 3-phosphate + L-tryptophan + H2O. It participates in amino-acid biosynthesis; L-tryptophan biosynthesis; L-tryptophan from chorismate: step 5/5. Its function is as follows. The alpha subunit is responsible for the aldol cleavage of indoleglycerol phosphate to indole and glyceraldehyde 3-phosphate. This chain is Tryptophan synthase alpha chain, found in Clostridium acetobutylicum (strain ATCC 824 / DSM 792 / JCM 1419 / IAM 19013 / LMG 5710 / NBRC 13948 / NRRL B-527 / VKM B-1787 / 2291 / W).